A 1114-amino-acid chain; its full sequence is Constitutive coactivator of PPAR-gamma-like protein 1 (1114 aa).

An interaction with YES1, SRC and FYN region spans residues 339-402 (PPHYLARPNP…YNLAEPALTL (64 aa)). 2 disordered regions span residues 372-396 (QAKP…YNLA) and 411-519 (EQNY…GNQI). Residues 431–443 (SPINPAPSGSPNH) show a composition bias toward polar residues. A compositionally biased stretch (basic and acidic residues) spans 477 to 498 (GWEKTGSHSEPQARGDPGDQTK). Positions 499 to 510 (AEGSSTASSGSQ) are enriched in polar residues. Residue T651 is modified to Phosphothreonine. Residues 825–1114 (AEQAAKVEKM…LEAAVLKKEE (290 aa)) are RNA binding. 3 positions are modified to omega-N-methylarginine: R869, R880, and R882. Positions 918–940 (FSGSDSSRTSKSQGGIQPIPSQG) are disordered. The residue at position 928 (K928) is an N6-acetyllysine. Over residues 929 to 940 (SQGGIQPIPSQG) the composition is skewed to low complexity. S956 is subject to Phosphoserine. Omega-N-methylarginine occurs at positions 978 and 982. The interval 1009-1099 (AIQGKPPYAA…LNALSTDSGC (91 aa)) is disordered. The residue at position 1019 (S1019) is a Phosphoserine. Residues 1022–1033 (EVAKELKSRSGE) show a composition bias toward basic and acidic residues. Over residues 1034-1043 (SKSSAMSSDG) the composition is skewed to polar residues. Phosphoserine occurs at positions 1040, 1041, and 1044. A compositionally biased stretch (polar residues) spans 1060–1097 (MNGSAGDTRAPSHSESALNNDSKTCNTNPHLNALSTDS).

Belongs to the constitutive coactivator of PPAR-gamma family. In terms of assembly, interacts with PURA. Interacts with YES1, SRC, FYN. Upon tyrosine phosphorylation, interacts with PIK3R1. Arg-978 is dimethylated, probably to asymmetric dimethylarginine. In terms of processing, phosphorylated on tyrosine by src family kinases upon ultraviolet exposure.

The protein resides in the cytoplasm. It is found in the cell membrane. Functionally, component of the oxidative stress-induced survival signaling. May regulate the activation of SRC family protein kinases. May act as a scaffolding protein enabling SRC family protein kinases to phosphorylate and activate PI3-kinase. Binds IGF2 RNA and promotes the production of IGF2 protein. This chain is Constitutive coactivator of PPAR-gamma-like protein 1 (FAM120A), found in Bos taurus (Bovine).